Consider the following 224-residue polypeptide: Ribonuclease 3 (224 aa).

Positions 4 to 126 (LDRLQHKIGY…IIGAMSLDSN (123 aa)) constitute an RNase III domain. Glutamate 39 lines the Mg(2+) pocket. Aspartate 43 is a catalytic residue. Aspartate 112 and glutamate 115 together coordinate Mg(2+). The active site involves glutamate 115. In terms of domain architecture, DRBM spans 153 to 223 (DPKTRLQEYL…AEQILKVLDI (71 aa)).

The protein belongs to the ribonuclease III family. As to quaternary structure, homodimer. Requires Mg(2+) as cofactor.

The protein localises to the cytoplasm. It catalyses the reaction Endonucleolytic cleavage to 5'-phosphomonoester.. Its function is as follows. Digests double-stranded RNA. Involved in the processing of primary rRNA transcript to yield the immediate precursors to the large and small rRNAs (23S and 16S). Processes some mRNAs, and tRNAs when they are encoded in the rRNA operon. Processes pre-crRNA and tracrRNA of type II CRISPR loci if present in the organism. The polypeptide is Ribonuclease 3 (Actinobacillus succinogenes (strain ATCC 55618 / DSM 22257 / CCUG 43843 / 130Z)).